The chain runs to 315 residues: 4-hydroxy-3-methylbut-2-enyl diphosphate reductase (315 aa).

Position 12 (C12) interacts with [4Fe-4S] cluster. Residues H41 and H74 each coordinate (2E)-4-hydroxy-3-methylbut-2-enyl diphosphate. Dimethylallyl diphosphate-binding residues include H41 and H74. Isopentenyl diphosphate is bound by residues H41 and H74. C96 is a [4Fe-4S] cluster binding site. H124 is a (2E)-4-hydroxy-3-methylbut-2-enyl diphosphate binding site. H124 contributes to the dimethylallyl diphosphate binding site. Position 124 (H124) interacts with isopentenyl diphosphate. The Proton donor role is filled by E126. T168 is a (2E)-4-hydroxy-3-methylbut-2-enyl diphosphate binding site. A [4Fe-4S] cluster-binding site is contributed by C198. S226, S227, N228, and S270 together coordinate (2E)-4-hydroxy-3-methylbut-2-enyl diphosphate. Residues S226, S227, N228, and S270 each contribute to the dimethylallyl diphosphate site. Isopentenyl diphosphate contacts are provided by S226, S227, N228, and S270.

This sequence belongs to the IspH family. The cofactor is [4Fe-4S] cluster.

The catalysed reaction is isopentenyl diphosphate + 2 oxidized [2Fe-2S]-[ferredoxin] + H2O = (2E)-4-hydroxy-3-methylbut-2-enyl diphosphate + 2 reduced [2Fe-2S]-[ferredoxin] + 2 H(+). It catalyses the reaction dimethylallyl diphosphate + 2 oxidized [2Fe-2S]-[ferredoxin] + H2O = (2E)-4-hydroxy-3-methylbut-2-enyl diphosphate + 2 reduced [2Fe-2S]-[ferredoxin] + 2 H(+). It functions in the pathway isoprenoid biosynthesis; dimethylallyl diphosphate biosynthesis; dimethylallyl diphosphate from (2E)-4-hydroxy-3-methylbutenyl diphosphate: step 1/1. Its pathway is isoprenoid biosynthesis; isopentenyl diphosphate biosynthesis via DXP pathway; isopentenyl diphosphate from 1-deoxy-D-xylulose 5-phosphate: step 6/6. Functionally, catalyzes the conversion of 1-hydroxy-2-methyl-2-(E)-butenyl 4-diphosphate (HMBPP) into a mixture of isopentenyl diphosphate (IPP) and dimethylallyl diphosphate (DMAPP). Acts in the terminal step of the DOXP/MEP pathway for isoprenoid precursor biosynthesis. This chain is 4-hydroxy-3-methylbut-2-enyl diphosphate reductase, found in Pseudomonas entomophila (strain L48).